A 478-amino-acid polypeptide reads, in one-letter code: Ribulose bisphosphate carboxylase large chain (478 aa).

The propeptide occupies 1 to 2 (MS). Pro-3 is subject to N-acetylproline. The residue at position 14 (Lys-14) is an N6,N6,N6-trimethyllysine. Positions 123 and 173 each coordinate substrate. The active-site Proton acceptor is the Lys-175. Lys-177 is a binding site for substrate. The Mg(2+) site is built by Lys-201, Asp-203, and Glu-204. An N6-carboxylysine modification is found at Lys-201. His-294 (proton acceptor) is an active-site residue. Residues Arg-295, His-327, and Ser-379 each coordinate substrate.

Belongs to the RuBisCO large chain family. Type I subfamily. Heterohexadecamer of 8 large chains and 8 small chains; disulfide-linked. The disulfide link is formed within the large subunit homodimers. Requires Mg(2+) as cofactor. The disulfide bond which can form in the large chain dimeric partners within the hexadecamer appears to be associated with oxidative stress and protein turnover.

The protein localises to the plastid. Its subcellular location is the chloroplast. It catalyses the reaction 2 (2R)-3-phosphoglycerate + 2 H(+) = D-ribulose 1,5-bisphosphate + CO2 + H2O. The enzyme catalyses D-ribulose 1,5-bisphosphate + O2 = 2-phosphoglycolate + (2R)-3-phosphoglycerate + 2 H(+). Its function is as follows. RuBisCO catalyzes two reactions: the carboxylation of D-ribulose 1,5-bisphosphate, the primary event in carbon dioxide fixation, as well as the oxidative fragmentation of the pentose substrate in the photorespiration process. Both reactions occur simultaneously and in competition at the same active site. This chain is Ribulose bisphosphate carboxylase large chain, found in Neurachne munroi.